Here is an 86-residue protein sequence, read N- to C-terminus: uncharacterized protein (86 aa).

This is an uncharacterized protein from Haemophilus influenzae (strain ATCC 51907 / DSM 11121 / KW20 / Rd).